Consider the following 69-residue polypeptide: Intrepicalcin (69 aa).

Residues 1 to 27 (MRQNTMTIIFIVFIVTFASLTIYGAEA) form the signal peptide. Residues 28-36 (SEANFLERR) constitute a propeptide that is removed on maturation. 3 disulfide bridges follow: cysteine 39-cysteine 53, cysteine 46-cysteine 57, and cysteine 52-cysteine 68. Residues 59–60 (RR) form an essential for stimulation of [3H]ryanodine binding to RYR1 region.

The protein belongs to the scorpion calcin family. Expressed by the venom gland.

The protein resides in the secreted. This toxin stabilizes ryanodine receptor 1 (RyR1) opening in a long-lasting subconductance state (55% of the full conductance state). Furthermore, it triggers calcium release from sarcoplasmic vesicles (45.3 nM are enough to induce a sharp release, and 50% of the total calcium is released after toxin (100 nM) addition) probably by acting as a cell-penetrating peptide (CPP). In addition, it has been shown to dose-dependently stimulate ryanodine binding to RyR1 (EC(50)=17.4 nM). It also augments the bell-shaped calcium-[3H]ryanodine binding curve that is maximal at about 10 uM calcium concentration. It binds a different site as ryanodine. It acts synergistically with caffeine. In vivo, intracerebroventricular injection into mice induces neurotoxic symptoms, followed by death. The protein is Intrepicalcin of Thorellius intrepidus (Scorpion).